Reading from the N-terminus, the 97-residue chain is Large ribosomal subunit protein uL23 (97 aa).

Belongs to the universal ribosomal protein uL23 family. As to quaternary structure, part of the 50S ribosomal subunit. Contacts protein L29, and trigger factor when it is bound to the ribosome.

Functionally, one of the early assembly proteins it binds 23S rRNA. One of the proteins that surrounds the polypeptide exit tunnel on the outside of the ribosome. Forms the main docking site for trigger factor binding to the ribosome. The sequence is that of Large ribosomal subunit protein uL23 from Sinorhizobium fredii (strain NBRC 101917 / NGR234).